The sequence spans 353 residues: 2-Hydroxyacid oxidase 2 (353 aa).

In terms of domain architecture, FMN hydroxy acid dehydrogenase spans 2–353 (PLVCLADFKA…SPDLIQFSRL (352 aa)). Residues 77-79 (PTA), S106, and Q128 each bind FMN. A 2-oxocarboxylate is bound at residue Y130. Phosphoserine is present on S133. T156 is a binding site for FMN. R165 contributes to the a 2-oxocarboxylate binding site. K224 is a binding site for FMN. Residue H248 is the Proton acceptor of the active site. A 2-oxocarboxylate is bound at residue R251. FMN contacts are provided by residues 279 to 283 (DGGVR) and 302 to 303 (GR). The Microbody targeting signal motif lies at 351–353 (SRL).

This sequence belongs to the FMN-dependent alpha-hydroxy acid dehydrogenase family. In terms of assembly, homotetramer. Could also form homooctamer. The cofactor is FMN. As to expression, expressed in kidney.

The protein resides in the peroxisome. It catalyses the reaction a (2S)-2-hydroxycarboxylate + O2 = a 2-oxocarboxylate + H2O2. It carries out the reaction 2-hydroxyoctanoate + O2 = 2-oxooctanoate + H2O2. The enzyme catalyses 2-hydroxyhexadecanoate + O2 = 2-oxohexadecanoate + H2O2. The catalysed reaction is 2-hydroxyhexanoate + O2 = 2-oxohexanoate + H2O2. It catalyses the reaction mandelate + O2 = phenylglyoxylate + H2O2. With respect to regulation, is inhibited in vitro by CCPST (4-carboxy-5-(4-chlorophenyl)sulfanyl-1,2,3-thiadiazole). Its function is as follows. Oxidase that catalyzes the oxidation of medium and long chain hydroxyacids such as 2-hydroxyhexadecanoate, 2-hydroxyoctanoate, 2-hydroxyhexanoate and 2-hydroxybutanoate, to the correspondong 2-oxoacids. Its role in the oxidation of 2-hydroxy fatty acids may contribute to the general pathway of fatty acid alpha-oxidation. Can also use mandelate as substrate. Active in vitro with the artificial electron acceptor 2,6-dichlorophenolindophenol (DCIP), but O2 is believed to be the physiological electron acceptor, leading to the production of H2O2. The chain is 2-Hydroxyacid oxidase 2 (Hao2) from Rattus norvegicus (Rat).